Here is a 346-residue protein sequence, read N- to C-terminus: Holliday junction branch migration complex subunit RuvB (346 aa).

Positions 1–182 (MSEPARLISP…FGIPVRLSFY (182 aa)) are large ATPase domain (RuvB-L). Residues leucine 21, arginine 22, glycine 63, lysine 66, threonine 67, threonine 68, 129–131 (EDF), arginine 172, tyrosine 182, and arginine 219 contribute to the ATP site. Mg(2+) is bound at residue threonine 67. Positions 183–253 (TVEELELIVR…IADEALTRLL (71 aa)) are small ATPAse domain (RuvB-S). A head domain (RuvB-H) region spans residues 256–346 (NVGFDQLDKR…AQFRLFQEDN (91 aa)). Positions 292, 311, and 316 each coordinate DNA.

It belongs to the RuvB family. Homohexamer. Forms an RuvA(8)-RuvB(12)-Holliday junction (HJ) complex. HJ DNA is sandwiched between 2 RuvA tetramers; dsDNA enters through RuvA and exits via RuvB. An RuvB hexamer assembles on each DNA strand where it exits the tetramer. Each RuvB hexamer is contacted by two RuvA subunits (via domain III) on 2 adjacent RuvB subunits; this complex drives branch migration. In the full resolvosome a probable DNA-RuvA(4)-RuvB(12)-RuvC(2) complex forms which resolves the HJ.

It localises to the cytoplasm. The catalysed reaction is ATP + H2O = ADP + phosphate + H(+). Functionally, the RuvA-RuvB-RuvC complex processes Holliday junction (HJ) DNA during genetic recombination and DNA repair, while the RuvA-RuvB complex plays an important role in the rescue of blocked DNA replication forks via replication fork reversal (RFR). RuvA specifically binds to HJ cruciform DNA, conferring on it an open structure. The RuvB hexamer acts as an ATP-dependent pump, pulling dsDNA into and through the RuvAB complex. RuvB forms 2 homohexamers on either side of HJ DNA bound by 1 or 2 RuvA tetramers; 4 subunits per hexamer contact DNA at a time. Coordinated motions by a converter formed by DNA-disengaged RuvB subunits stimulates ATP hydrolysis and nucleotide exchange. Immobilization of the converter enables RuvB to convert the ATP-contained energy into a lever motion, pulling 2 nucleotides of DNA out of the RuvA tetramer per ATP hydrolyzed, thus driving DNA branch migration. The RuvB motors rotate together with the DNA substrate, which together with the progressing nucleotide cycle form the mechanistic basis for DNA recombination by continuous HJ branch migration. Branch migration allows RuvC to scan DNA until it finds its consensus sequence, where it cleaves and resolves cruciform DNA. The chain is Holliday junction branch migration complex subunit RuvB from Rhizobium leguminosarum bv. trifolii (strain WSM2304).